A 182-amino-acid chain; its full sequence is ATP-dependent protease subunit HslV (182 aa).

The active site involves threonine 12. Alanine 167, cysteine 170, and threonine 173 together coordinate Na(+).

The protein belongs to the peptidase T1B family. HslV subfamily. As to quaternary structure, a double ring-shaped homohexamer of HslV is capped on each side by a ring-shaped HslU homohexamer. The assembly of the HslU/HslV complex is dependent on binding of ATP.

It is found in the cytoplasm. It carries out the reaction ATP-dependent cleavage of peptide bonds with broad specificity.. Allosterically activated by HslU binding. Functionally, protease subunit of a proteasome-like degradation complex believed to be a general protein degrading machinery. The chain is ATP-dependent protease subunit HslV from Chlorobium limicola (strain DSM 245 / NBRC 103803 / 6330).